The primary structure comprises 1551 residues: Dual oxidase 1 (1551 aa).

The signal sequence occupies residues 1-21 (MGFCLALAWTLLVGAWTPLGA). At 22-596 (QNPISWEVQR…YFEGSGFGFG (575 aa)) the chain is on the extracellular side. The segment at 26–593 (SWEVQRFDGW…VRDYFEGSGF (568 aa)) is peroxidase-like; mediates peroxidase activity. Residue Asn-94 is glycosylated (N-linked (GlcNAc...) asparagine). The disordered stretch occupies residues 150 to 172 (RWDPETGRSPSNPRDPANQVTGW). Residues Asn-342, Asn-354, Asn-461, and Asn-534 are each glycosylated (N-linked (GlcNAc...) asparagine). Residues 597-617 (VTIGTLCCFPLVSLLSAWIVA) form a helical membrane-spanning segment. Topologically, residues 618-1044 (RLRMRNFKRL…KRFIENYRRH (427 aa)) are cytoplasmic. EF-hand domains are found at residues 815-850 (PQDMFVESMFSLADKDGNGYLSFREFLDILVVFMKG), 851-886 (SPEEKSRLMFRMYDFDGNGLISKDEFIRMLRSFIEI), and 895-930 (QLAEVVESMFRESGFQDKEELTWEDFHFMLRDHNSE). Ca(2+) contacts are provided by Asp-828, Asp-830, Asn-832, Tyr-834, Glu-839, Asp-864, Asp-866, Asn-868, and Glu-875. Residues 956 to 1248 (YISQDMICPS…GSFALIQLPR (293 aa)) are interaction with TXNDC11. The helical transmembrane segment at 1045 to 1065 (IGCVAVFYAIAGGLFLERAYY) threads the bilayer. Residues 1066 to 1080 (YAFAAHHTGITDTTR) are Extracellular-facing. A helical transmembrane segment spans residues 1081 to 1101 (VGIILSRGTAASISFMFSYIL). In terms of domain architecture, Ferric oxidoreductase spans 1087 to 1269 (RGTAASISFM…YGGDKLVSLS (183 aa)). The Cytoplasmic portion of the chain corresponds to 1102–1148 (LTMCRNLITFLRETFLNRYVPFDAAVDFHRLIASTAIVLTVLHSVGH). The helical transmembrane segment at 1149 to 1171 (VVNVYLFSISPLSVLSCLFPGLF) threads the bilayer. The Extracellular segment spans residues 1172 to 1188 (HDDGSELPQKYYWWFFQ). The helical transmembrane segment at 1189–1209 (TVPGLTGVVLLLILAIMYVFA) threads the bilayer. Topologically, residues 1210–1226 (SHHFRRRSFRGFWLTHH) are cytoplasmic. A helical transmembrane segment spans residues 1227–1247 (LYILLYVLLIIHGSFALIQLP). Position 1248 (Arg-1248) is a topological domain, extracellular. A helical membrane pass occupies residues 1249-1269 (FHIFFLVPAIIYGGDKLVSLS). The FAD-binding FR-type domain maps to 1270–1376 (RKKVEISVVK…DGPFGEGHQE (107 aa)). Over 1270–1551 (RKKVEISVVK…THFSHHYENF (282 aa)) the chain is Cytoplasmic.

The protein in the N-terminal section; belongs to the peroxidase family. Interacts with TXNDC11, TPO and CYBA. N-glycosylated. Expressed in thyrocytes and tracheal surface epithelial cells (at protein level). Expressed in thyroid, trachea, bronchium, and to a lower extent, in placenta, testis, prostate, pancreas and heart.

It localises to the apical cell membrane. The enzyme catalyses NADH + O2 + H(+) = H2O2 + NAD(+). It catalyses the reaction NADPH + O2 + H(+) = H2O2 + NADP(+). The protein operates within hormone biosynthesis; thyroid hormone biosynthesis. With respect to regulation, the NADPH oxidase activity is calcium-dependent. Peroxidase activity is inhibited by aminobenzohydrazide. In terms of biological role, generates hydrogen peroxide which is required for the activity of thyroid peroxidase/TPO and lactoperoxidase/LPO. Plays a role in thyroid hormones synthesis and lactoperoxidase-mediated antimicrobial defense at the surface of mucosa. May have its own peroxidase activity through its N-terminal peroxidase-like domain. This Homo sapiens (Human) protein is Dual oxidase 1 (DUOX1).